The primary structure comprises 130 residues: Ribonuclease P protein component (130 aa).

Belongs to the RnpA family. In terms of assembly, consists of a catalytic RNA component (M1 or rnpB) and a protein subunit.

The catalysed reaction is Endonucleolytic cleavage of RNA, removing 5'-extranucleotides from tRNA precursor.. Functionally, RNaseP catalyzes the removal of the 5'-leader sequence from pre-tRNA to produce the mature 5'-terminus. It can also cleave other RNA substrates such as 4.5S RNA. The protein component plays an auxiliary but essential role in vivo by binding to the 5'-leader sequence and broadening the substrate specificity of the ribozyme. The polypeptide is Ribonuclease P protein component (Desulfovibrio desulfuricans (strain ATCC 27774 / DSM 6949 / MB)).